We begin with the raw amino-acid sequence, 59 residues long: Protein translocase subunit SecE (59 aa).

The helical transmembrane segment at 35–55 (IVAIGIAIIGVVGFIIVLIGE) threads the bilayer.

It belongs to the SecE/SEC61-gamma family. Component of the Sec protein translocase complex. Heterotrimer consisting of SecY (alpha), SecG (beta) and SecE (gamma) subunits. The heterotrimers can form oligomers, although 1 heterotrimer is thought to be able to translocate proteins. Interacts with the ribosome. May interact with SecDF, and other proteins may be involved.

The protein localises to the cell membrane. Its function is as follows. Essential subunit of the Sec protein translocation channel SecYEG. Clamps together the 2 halves of SecY. May contact the channel plug during translocation. This is Protein translocase subunit SecE from Methanobrevibacter smithii (strain ATCC 35061 / DSM 861 / OCM 144 / PS).